Reading from the N-terminus, the 382-residue chain is tRNA (guanine(37)-N(1))-methyltransferase (382 aa).

Residues His-205, 243-244 (DL), 269-270 (DA), and Asn-291 contribute to the S-adenosyl-L-methionine site.

This sequence belongs to the class I-like SAM-binding methyltransferase superfamily. TRM5/TYW2 family. Monomer.

The protein resides in the mitochondrion matrix. The protein localises to the nucleus. It localises to the cytoplasm. It carries out the reaction guanosine(37) in tRNA + S-adenosyl-L-methionine = N(1)-methylguanosine(37) in tRNA + S-adenosyl-L-homocysteine + H(+). Its function is as follows. Specifically methylates the N1 position of guanosine-37 in various cytoplasmic and mitochondrial tRNAs. Methylation is not dependent on the nature of the nucleoside 5' of the target nucleoside. This is the first step in the biosynthesis of wybutosine (yW), a modified base adjacent to the anticodon of tRNAs and required for accurate decoding. The sequence is that of tRNA (guanine(37)-N(1))-methyltransferase from Entamoeba histolytica (strain ATCC 30459 / HM-1:IMSS / ABRM).